Consider the following 602-residue polypeptide: Elongation factor 4 (602 aa).

Residues 2 to 184 (KKIRNFAIIA…RIVRDIPPPK (183 aa)) enclose the tr-type G domain. Residues 14 to 19 (DHGKST) and 131 to 134 (NKID) each bind GTP.

This sequence belongs to the TRAFAC class translation factor GTPase superfamily. Classic translation factor GTPase family. LepA subfamily.

Its subcellular location is the cell membrane. It carries out the reaction GTP + H2O = GDP + phosphate + H(+). In terms of biological role, required for accurate and efficient protein synthesis under certain stress conditions. May act as a fidelity factor of the translation reaction, by catalyzing a one-codon backward translocation of tRNAs on improperly translocated ribosomes. Back-translocation proceeds from a post-translocation (POST) complex to a pre-translocation (PRE) complex, thus giving elongation factor G a second chance to translocate the tRNAs correctly. Binds to ribosomes in a GTP-dependent manner. The chain is Elongation factor 4 from Baumannia cicadellinicola subsp. Homalodisca coagulata.